Reading from the N-terminus, the 451-residue chain is Probable D-serine dehydratase (451 aa).

The disordered stretch occupies residues 1 to 55 (MPGRTRPSCRLAITFTPRPDSATPRAGRAAPATGRRSNRSRSTLSATASPMPRRP). The span at 22–35 (ATPRAGRAAPATGR) shows a compositional bias: low complexity. At K118 the chain carries N6-(pyridoxal phosphate)lysine.

The protein belongs to the serine/threonine dehydratase family. DsdA subfamily. It depends on pyridoxal 5'-phosphate as a cofactor.

It catalyses the reaction D-serine = pyruvate + NH4(+). In Paracidovorax citrulli (strain AAC00-1) (Acidovorax citrulli), this protein is Probable D-serine dehydratase.